Consider the following 685-residue polypeptide: uncharacterized protein (685 aa).

Disordered stretches follow at residues 502-538 (NLNQ…SLNK) and 635-685 (RSKR…IHNA). A compositionally biased stretch (polar residues) spans 518 to 538 (SSENMTKFPSSRGKSTVSLNK). Residues 675-685 (KLKKSLIIHNA) show a composition bias toward basic residues.

This is an uncharacterized protein from Homo sapiens (Human).